The following is a 207-amino-acid chain: Large ribosomal subunit protein uL4 (207 aa).

Residues His-49–Ile-78 form a disordered region.

It belongs to the universal ribosomal protein uL4 family. As to quaternary structure, part of the 50S ribosomal subunit.

Its function is as follows. One of the primary rRNA binding proteins, this protein initially binds near the 5'-end of the 23S rRNA. It is important during the early stages of 50S assembly. It makes multiple contacts with different domains of the 23S rRNA in the assembled 50S subunit and ribosome. Functionally, forms part of the polypeptide exit tunnel. In Streptococcus pneumoniae serotype 19F (strain G54), this protein is Large ribosomal subunit protein uL4.